A 305-amino-acid chain; its full sequence is Ferredoxin--NADP reductase (305 aa).

FAD contacts are provided by Glu-31, Tyr-42, Val-82, and Asp-274.

Belongs to the ferredoxin--NADP reductase type 2 family. In terms of assembly, homodimer. FAD serves as cofactor.

It carries out the reaction 2 reduced [2Fe-2S]-[ferredoxin] + NADP(+) + H(+) = 2 oxidized [2Fe-2S]-[ferredoxin] + NADPH. This Ignicoccus hospitalis (strain KIN4/I / DSM 18386 / JCM 14125) protein is Ferredoxin--NADP reductase.